The primary structure comprises 465 residues: Macrophage metalloelastase (465 aa).

The N-terminal stretch at 1–21 (MKFLLVLVLLVSLQVSACGAA) is a signal peptide. The propeptide at 22-101 (PMNESEFAEW…DVQHLRAVPQ (80 aa)) is activation peptide. A Cysteine switch motif is present at residues 86–93 (SRCGVPDV). Cysteine 88 is a Zn(2+) binding site. 2 residues coordinate Ca(2+): aspartate 120 and aspartate 154. Zn(2+) is bound by residues histidine 164 and aspartate 166. Ca(2+)-binding residues include aspartate 171, glycine 172, glycine 174, and threonine 176. Residue histidine 179 participates in Zn(2+) binding. Positions 186 and 190 each coordinate Ca(2+). Histidine 192 is a binding site for Zn(2+). The Ca(2+) site is built by aspartate 194, glutamate 195, and glutamate 197. Histidine 214 contributes to the Zn(2+) binding site. Residue glutamate 215 is part of the active site. The Zn(2+) site is built by histidine 218 and histidine 224. A disulfide bridge links cysteine 278 with cysteine 465. Hemopexin repeat units follow at residues 281-324 (SLSF…WPTI), 325-371 (PSGI…GFPA), 373-421 (VKKI…FPGI), and 422-465 (RPKI…WFGC). Aspartate 285 provides a ligand contact to Ca(2+). Asparagine 313 is a glycosylation site (N-linked (GlcNAc...) asparagine). The Ca(2+) site is built by aspartate 377 and aspartate 426.

This sequence belongs to the peptidase M10A family. Ca(2+) is required as a cofactor. The cofactor is Zn(2+).

Its subcellular location is the secreted. The protein localises to the extracellular space. It localises to the extracellular matrix. The catalysed reaction is Hydrolysis of soluble and insoluble elastin. Specific cleavages are also produced at 14-Ala-|-Leu-15 and 16-Tyr-|-Leu-17 in the B chain of insulin.. Functionally, may be involved in tissue injury and remodeling. Has significant elastolytic activity. Can accept large and small amino acids at the P1' site, but has a preference for leucine. Aromatic or hydrophobic residues are preferred at the P1 site, with small hydrophobic residues (preferably alanine) occupying P3. The chain is Macrophage metalloelastase (Mmp12) from Rattus norvegicus (Rat).